We begin with the raw amino-acid sequence, 85 residues long: U4-theraphotoxin-Hhn1c (85 aa).

Residues 1–22 form the signal peptide; that stretch reads MKVTLIAILTCAAVLVLHTTAA. Positions 23–48 are excised as a propeptide; sequence EELEAESQLMEVGMPDTELAAVDEER. 3 disulfide bridges follow: Cys-52/Cys-66, Cys-56/Cys-77, and Cys-71/Cys-82.

It belongs to the neurotoxin 12 (Hwtx-2) family. 02 (Hwtx-2) subfamily. In terms of tissue distribution, expressed by the venom gland.

The protein resides in the secreted. In terms of biological role, postsynaptic neurotoxin. The protein is U4-theraphotoxin-Hhn1c of Cyriopagopus hainanus (Chinese bird spider).